A 1382-amino-acid polypeptide reads, in one-letter code: Hepatocyte growth factor receptor (1382 aa).

An N-terminal signal peptide occupies residues 1–24 (MKAPTALAPGILLLLLTLAQRSHG). The Extracellular segment spans residues 25 to 935 (ECKEALVKSE…IVQPDQNFAG (911 aa)). In terms of domain architecture, Sema spans 27-516 (KEALVKSEMN…TGKKITKIPL (490 aa)). Residue Asn45 is glycosylated (N-linked (GlcNAc...) asparagine). Intrachain disulfides connect Cys95/Cys101, Cys98/Cys160, Cys133/Cys141, and Cys173/Cys176. The N-linked (GlcNAc...) asparagine glycan is linked to Asn106. N-linked (GlcNAc...) asparagine glycans are attached at residues Asn203 and Asn359. Disulfide bonds link Cys299/Cys364 and Cys386/Cys398. Residues Asn400 and Asn406 are each glycosylated (N-linked (GlcNAc...) asparagine). 4 disulfide bridges follow: Cys521–Cys539, Cys527–Cys562, Cys530–Cys546, and Cys542–Cys552. 3 IPT/TIG domains span residues 564 to 656 (PAVY…FSYV), 658 to 740 (PVIT…FSYR), and 743 to 837 (PVVS…LTYV). O-linked (Man) threonine glycosylation is present at Thr583. 2 N-linked (GlcNAc...) asparagine glycosylation sites follow: Asn608 and Asn636. O-linked (Man) threonine glycosylation is found at Thr677 and Thr762. Residues Asn786 and Asn880 are each glycosylated (N-linked (GlcNAc...) asparagine). The helical transmembrane segment at 936–956 (LIIGAVSISVVVLLVSGLFLW) threads the bilayer. The Cytoplasmic segment spans residues 957 to 1379 (LRKRKHKDLG…LPSQDNIDGE (423 aa)). Ser967 carries the phosphoserine modification. The residue at position 978 (Thr978) is a Phosphothreonine. 3 positions are modified to phosphoserine: Ser991, Ser998, and Ser1001. Tyr1004 bears the Phosphotyrosine mark. The Protein kinase domain maps to 1079–1346 (VHFNEVIGRG…RISSIFSTFI (268 aa)). Residues 1085–1093 (IGRGHFGCV) and Lys1111 each bind ATP. The active-site Proton acceptor is the Asp1205. The tract at residues 1213 to 1382 (LDEKFTVKVA…QDNIDGEANT (170 aa)) is interaction with RANBP9. Tyr1231 carries the phosphotyrosine modification. Tyr1235 and Tyr1236 each carry phosphotyrosine; by autocatalysis. Residue Thr1290 is modified to Phosphothreonine. Residues 1321 to 1360 (WHPKAEMRPSVSELVSRISSIFSTFIGEHYVHVNATYVNV) are interaction with MUC20. A phosphotyrosine; by autocatalysis mark is found at Tyr1350 and Tyr1357. Residue Tyr1366 is modified to Phosphotyrosine.

Belongs to the protein kinase superfamily. Tyr protein kinase family. As to quaternary structure, heterodimer made of an alpha chain (50 kDa) and a beta chain (145 kDa) which are disulfide linked. Binds PLXNB1. Interacts when phosphorylated with downstream effectors including STAT3, PIK3R1, SRC, PCLG1, GRB2 and GAB1. Interacts with SPSB1, SPSB2 and SPSB4. Interacts with INPP5D/SHIP1. When phosphorylated at Tyr-1357, interacts with INPPL1/SHIP2. Interacts with RANBP9 and RANBP10, as well as SPSB1, SPSB2, SPSB3 and SPSB4. SPSB1 binding occurs in the presence and in the absence of HGF, however HGF treatment has a positive effect on this interaction. Interacts with MUC20; prevents interaction with GRB2 and suppresses hepatocyte growth factor-induced cell proliferation. Interacts with GRB10. Interacts with PTPN1 and PTPN2. Interacts with HSP90AA1 and HSP90AB1; the interaction suppresses MET kinase activity. Interacts with tensin TNS3. Interacts (when phosphorylated) with tensin TNS4 (via SH2 domain); the interaction increases MET protein stability by inhibiting MET endocytosis and subsequent lysosomal degradation. In terms of processing, autophosphorylated in response to ligand binding on Tyr-1235 and Tyr-1236 in the kinase domain leading to further phosphorylation of Tyr-1350 and Tyr-1357 in the C-terminal multifunctional docking site. Dephosphorylated by PTPRJ at Tyr-1350 and Tyr-1366. Dephosphorylated by PTPN1 and PTPN2. Ubiquitinated. Ubiquitination by CBL regulates the receptor stability and activity through proteasomal degradation. Post-translationally, O-mannosylation of IPT/TIG domains by TMEM260 is required for protein maturation. O-mannosylated residues are composed of single mannose glycans that are not elongated or modified. In terms of tissue distribution, expressed at highest levels in lung, liver and kidney, also expressed in stomach, intestine, spleen, testis and brain. Not expressed in heart or muscle.

Its subcellular location is the membrane. The enzyme catalyses L-tyrosyl-[protein] + ATP = O-phospho-L-tyrosyl-[protein] + ADP + H(+). Its activity is regulated as follows. In its inactive state, the C-terminal tail interacts with the catalytic domain and inhibits the kinase activity. Upon ligand binding, the C-terminal tail is displaced and becomes phosphorylated, thus increasing the kinase activity. Its function is as follows. Receptor tyrosine kinase that transduces signals from the extracellular matrix into the cytoplasm by binding to hepatocyte growth factor/HGF ligand. Regulates many physiological processes including proliferation, scattering, morphogenesis and survival. Ligand binding at the cell surface induces autophosphorylation of MET on its intracellular domain that provides docking sites for downstream signaling molecules. Following activation by ligand, interacts with the PI3-kinase subunit PIK3R1, PLCG1, SRC, GRB2, STAT3 or the adapter GAB1. Recruitment of these downstream effectors by MET leads to the activation of several signaling cascades including the RAS-ERK, PI3 kinase-AKT, or PLCgamma-PKC. The RAS-ERK activation is associated with the morphogenetic effects while PI3K/AKT coordinates prosurvival effects. During embryonic development, MET signaling plays a role in gastrulation, development and migration of muscles and neuronal precursors, angiogenesis and kidney formation. In adults, participates in wound healing as well as organ regeneration and tissue remodeling. Also promotes differentiation and proliferation of hematopoietic cells. This chain is Hepatocyte growth factor receptor (Met), found in Rattus norvegicus (Rat).